Reading from the N-terminus, the 707-residue chain is G protein-coupled receptor kinase 2 (707 aa).

An N-terminal region spans residues methionine 1–aspartate 190. In terms of domain architecture, RGS spans lysine 54–cysteine 175. In terms of domain architecture, Protein kinase spans phenylalanine 191–phenylalanine 455. ATP contacts are provided by residues isoleucine 197–valine 205 and lysine 220. Aspartate 318 serves as the catalytic Proton acceptor. The AGC-kinase C-terminal domain occupies lysine 456 to isoleucine 523. In terms of domain architecture, PH spans aspartate 558–lysine 658.

This sequence belongs to the protein kinase superfamily. AGC Ser/Thr protein kinase family. GPRK subfamily. As to quaternary structure, interacts with amx-2; the interaction promotes phosphorylation of amx-2. As to expression, expressed in many neurons in the adult including the ASH neurons and other sensory neurons, many interneurons, and motor neurons of the ventral nerve cord. Expressed broadly in head neurons and is detected in several head acetylcholine neurons including the AVA, AVB, AVD and AVE premotor interneurons, the SMD and RMD head motor neurons, and the AIN, AIY, SIA, SIB and SAA interneurons. Expressed in HSN motor neurons and VC4/VC5 motor neurons. Also expressed in vulval muscle cells. Expressed in premotor and RIS interneurons. Expressed in ciliated neurons such as AWA, AWB, AWC, ASH and ADF olfactory and nociceptive neurons, and in chemosensory ASH neurons. Expressed in RMG neurons and AVK interneurons.

The catalysed reaction is [G-protein-coupled receptor] + ATP = [G-protein-coupled receptor]-phosphate + ADP + H(+). Its function is as follows. Specifically phosphorylates the activated forms of G protein-coupled receptors. Required in adult sensory neurons for chemotaxis. Plays a role in the ASH sensory neurons in the chemotaxis response to NaCl where it is likely to modulate the strength of the NaCl avoidance response which occurs at high NaCl concentrations. Required in the HSN motor neurons for normal egg laying by promoting phosphorylation of amine oxidase amx-2 which inhibits amx-2 activity, preventing metabolism of serotonin. Acts in head acetylcholine neurons to positively regulate locomotion. Inactivates dopamine receptor dop-3 which leads to inactivation of guanine nucleotide-binding protein G(o) subunit goa-1 and activation of the unc-77/nca-1 and nca-2 ion channel proteins. Acts as a positive regulator of swimming by inactivating two dopamine receptors, dop-3 in the premotor interneurons that negatively controls early swimming through the nca ion channel, and dop-1 in the RIS neuron that inhibits late-stage swimming via the signaling of FMRFamide-like neuropeptide flp-11. Controls movement quiescence by negatively regulating multiple targets including egl-4 in ciliated neurons, the level of ligands of the neuropeptide receptor npr-1 in RMG neurons, and the secretion of flp-1 from AVK interneurons. In Caenorhabditis elegans, this protein is G protein-coupled receptor kinase 2 (grk-2).